The primary structure comprises 190 residues: Holliday junction branch migration complex subunit RuvA (190 aa).

Residues 1-64 (MIGRISGQLA…EDAQILYGFG (64 aa)) form a domain I region. The interval 65-137 (SATERAAFRQ…LKGKLGADIG (73 aa)) is domain II. Residues 137 to 141 (GVQVS) are flexible linker. The tract at residues 142-190 (VSSDSQSDILQALVALGYSDRDAALALKALPKDIGVSDGIKLALKALAK) is domain III.

This sequence belongs to the RuvA family. In terms of assembly, homotetramer. Forms an RuvA(8)-RuvB(12)-Holliday junction (HJ) complex. HJ DNA is sandwiched between 2 RuvA tetramers; dsDNA enters through RuvA and exits via RuvB. An RuvB hexamer assembles on each DNA strand where it exits the tetramer. Each RuvB hexamer is contacted by two RuvA subunits (via domain III) on 2 adjacent RuvB subunits; this complex drives branch migration. In the full resolvosome a probable DNA-RuvA(4)-RuvB(12)-RuvC(2) complex forms which resolves the HJ.

Its subcellular location is the cytoplasm. Functionally, the RuvA-RuvB-RuvC complex processes Holliday junction (HJ) DNA during genetic recombination and DNA repair, while the RuvA-RuvB complex plays an important role in the rescue of blocked DNA replication forks via replication fork reversal (RFR). RuvA specifically binds to HJ cruciform DNA, conferring on it an open structure. The RuvB hexamer acts as an ATP-dependent pump, pulling dsDNA into and through the RuvAB complex. HJ branch migration allows RuvC to scan DNA until it finds its consensus sequence, where it cleaves and resolves the cruciform DNA. The protein is Holliday junction branch migration complex subunit RuvA of Polaromonas sp. (strain JS666 / ATCC BAA-500).